A 441-amino-acid chain; its full sequence is CBL-interacting serine/threonine-protein kinase 3 (441 aa).

The region spanning 14–269 (YEVGRTIGEG…PQEVFEDEWF (256 aa)) is the Protein kinase domain. Residues 20–28 (IGEGTFAKV) and lysine 43 contribute to the ATP site. Residue aspartate 137 is the Proton acceptor of the active site. Residues 155 to 184 (DFGLSALSQQVRDDGLLHTSCGTPNYVAPE) form an activation loop region. Residues 307–331 (EQPAAINAFEIISMSRGLNLENLFD) form the NAF domain. The segment at 337 to 366 (KRETRITLRGGANEIIEKIEEAAKPLGFDV) is PPI.

This sequence belongs to the protein kinase superfamily. CAMK Ser/Thr protein kinase family. SNF1 subfamily. As to quaternary structure, interacts with CBL3 and CBL9. It depends on Mn(2+) as a cofactor. Mostly expressed in germinating seeds and young seedlings. Detected at low levels in roots, stems, leaves and flowers.

It catalyses the reaction L-seryl-[protein] + ATP = O-phospho-L-seryl-[protein] + ADP + H(+). The enzyme catalyses L-threonyl-[protein] + ATP = O-phospho-L-threonyl-[protein] + ADP + H(+). In terms of biological role, involved in the resistance to some abiotic stresses (e.g. high salt, hyperosmotic stress) in young seedlings, by regulating the expression of several stress-inducible genes (cold- and salt-induced genes but not drought-responsive genes). Required for the ABA response during germination. CIPK serine-threonine protein kinases interact with CBL proteins. Binding of a CBL protein to the regulatory NAF domain of CIPK protein lead to the activation of the kinase in a calcium-dependent manner. The CBL9/CIPK3 complex acts in the regulation of abscisic acid response in seed germination. This chain is CBL-interacting serine/threonine-protein kinase 3 (CIPK3), found in Arabidopsis thaliana (Mouse-ear cress).